The sequence spans 933 residues: 2-oxoglutarate dehydrogenase E1 component (933 aa).

It belongs to the alpha-ketoglutarate dehydrogenase family. As to quaternary structure, homodimer. Part of the 2-oxoglutarate dehydrogenase (OGDH) complex composed of E1 (2-oxoglutarate dehydrogenase), E2 (dihydrolipoamide succinyltransferase) and E3 (dihydrolipoamide dehydrogenase); the complex contains multiple copies of the three enzymatic components (E1, E2 and E3). It depends on thiamine diphosphate as a cofactor.

The enzyme catalyses N(6)-[(R)-lipoyl]-L-lysyl-[protein] + 2-oxoglutarate + H(+) = N(6)-[(R)-S(8)-succinyldihydrolipoyl]-L-lysyl-[protein] + CO2. In terms of biological role, E1 component of the 2-oxoglutarate dehydrogenase (OGDH) complex which catalyzes the decarboxylation of 2-oxoglutarate, the first step in the conversion of 2-oxoglutarate to succinyl-CoA and CO(2). The sequence is that of 2-oxoglutarate dehydrogenase E1 component from Staphylococcus saprophyticus subsp. saprophyticus (strain ATCC 15305 / DSM 20229 / NCIMB 8711 / NCTC 7292 / S-41).